We begin with the raw amino-acid sequence, 337 residues long: uncharacterized protein (337 aa).

Positions 291–314 (NKTRQCSNTKTTTKSTMTPINNGF) are disordered. The span at 299 to 308 (TKTTTKSTMT) shows a compositional bias: low complexity.

This is an uncharacterized protein from Acanthamoeba polyphaga mimivirus (APMV).